A 137-amino-acid polypeptide reads, in one-letter code: Profilin-3 (137 aa).

It belongs to the profilin family. In terms of assembly, interacts with ACTRT3. Detected in round spermatids.

Its subcellular location is the cytoplasm. It localises to the cytoskeleton. It is found in the nucleus. In terms of biological role, binds to actin and affects the structure of the cytoskeleton. Slightly reduces actin polymerization. Binds to poly-L-proline, phosphatidylinositol 3-phosphate (PtdIns(3)P), phosphatidylinositol 4,5-bisphosphate (PtdIns(4,5)P2), and phosphatidylinositol 4-phosphate (PtdIns(4)P). May be involved in spermatogenesis. The sequence is that of Profilin-3 (Pfn3) from Rattus norvegicus (Rat).